Consider the following 542-residue polypeptide: Chaperonin GroEL (542 aa).

Residues 29-32, 86-90, Gly-413, 476-478, and Asp-492 each bind ATP; these read TLGP, DGTTT, and NAA. The interval 523–542 is disordered; that stretch reads EPAAPAMPGGMDPSMMGGMM. Positions 526–542 are enriched in low complexity; sequence APAMPGGMDPSMMGGMM.

This sequence belongs to the chaperonin (HSP60) family. In terms of assembly, forms a cylinder of 14 subunits composed of two heptameric rings stacked back-to-back. Interacts with the co-chaperonin GroES.

Its subcellular location is the cytoplasm. The catalysed reaction is ATP + H2O + a folded polypeptide = ADP + phosphate + an unfolded polypeptide.. In terms of biological role, together with its co-chaperonin GroES, plays an essential role in assisting protein folding. The GroEL-GroES system forms a nano-cage that allows encapsulation of the non-native substrate proteins and provides a physical environment optimized to promote and accelerate protein folding. This chain is Chaperonin GroEL, found in Streptococcus uberis (strain ATCC BAA-854 / 0140J).